Consider the following 182-residue polypeptide: Small ribosomal subunit protein uS4c (182 aa).

One can recognise an S4 RNA-binding domain in the interval 82–143 (MRLDNILFRL…KQRSKALIQN (62 aa)).

It belongs to the universal ribosomal protein uS4 family. As to quaternary structure, part of the 30S ribosomal subunit. Contacts protein S5. The interaction surface between S4 and S5 is involved in control of translational fidelity.

It localises to the plastid. The protein localises to the chloroplast. One of the primary rRNA binding proteins, it binds directly to 16S rRNA where it nucleates assembly of the body of the 30S subunit. Its function is as follows. With S5 and S12 plays an important role in translational accuracy. In Libertia formosa (Snowy mermaid), this protein is Small ribosomal subunit protein uS4c (rps4).